Consider the following 287-residue polypeptide: mRNA-capping enzyme regulatory subunit OPG124 (287 aa).

This sequence belongs to the orthopoxvirus mRNA-capping enzyme regulatory subunit family. Interacts with the late transcription elongation factor VLTF-4/OPG110. Interacts with the late transcription factors VLTF-1.

The protein resides in the virion. Its function is as follows. Acts with RNA polymerase to initiate transcription from late gene promoters. This Monkeypox virus protein is mRNA-capping enzyme regulatory subunit OPG124 (OPG124).